A 633-amino-acid polypeptide reads, in one-letter code: 1-deoxy-D-xylulose-5-phosphate synthase (633 aa).

Thiamine diphosphate is bound by residues H74 and 115–117 (GHA). D146 lines the Mg(2+) pocket. Residues 147–148 (GA), N175, Y286, and E363 each bind thiamine diphosphate. Position 175 (N175) interacts with Mg(2+).

Belongs to the transketolase family. DXPS subfamily. As to quaternary structure, homodimer. Mg(2+) serves as cofactor. It depends on thiamine diphosphate as a cofactor.

The catalysed reaction is D-glyceraldehyde 3-phosphate + pyruvate + H(+) = 1-deoxy-D-xylulose 5-phosphate + CO2. It participates in metabolic intermediate biosynthesis; 1-deoxy-D-xylulose 5-phosphate biosynthesis; 1-deoxy-D-xylulose 5-phosphate from D-glyceraldehyde 3-phosphate and pyruvate: step 1/1. Functionally, catalyzes the acyloin condensation reaction between C atoms 2 and 3 of pyruvate and glyceraldehyde 3-phosphate to yield 1-deoxy-D-xylulose-5-phosphate (DXP). The polypeptide is 1-deoxy-D-xylulose-5-phosphate synthase (Dehalococcoides mccartyi (strain ATCC BAA-2100 / JCM 16839 / KCTC 5957 / BAV1)).